Consider the following 172-residue polypeptide: Adenine phosphoribosyltransferase (172 aa).

The protein belongs to the purine/pyrimidine phosphoribosyltransferase family. Homodimer.

It is found in the cytoplasm. It carries out the reaction AMP + diphosphate = 5-phospho-alpha-D-ribose 1-diphosphate + adenine. Its pathway is purine metabolism; AMP biosynthesis via salvage pathway; AMP from adenine: step 1/1. Catalyzes a salvage reaction resulting in the formation of AMP, that is energically less costly than de novo synthesis. The polypeptide is Adenine phosphoribosyltransferase (Streptococcus mutans serotype c (strain ATCC 700610 / UA159)).